A 673-amino-acid polypeptide reads, in one-letter code: Putative transcription factor tau subunit sfc9 (673 aa).

As to quaternary structure, may be a component of the TFIIIC complex.

It is found in the nucleus. In Schizosaccharomyces pombe (strain 972 / ATCC 24843) (Fission yeast), this protein is Putative transcription factor tau subunit sfc9.